A 757-amino-acid chain; its full sequence is RNA-directed RNA polymerase catalytic subunit (757 aa).

The interval 50 to 82 is disordered; it reads SEKGKWTTNTETGAPQLNPIDGPLPEDNEPSGY. Over residues 55-64 the composition is skewed to polar residues; the sequence is WTTNTETGAP. 2 consecutive short sequence motifs (nuclear localization signal) follow at residues 187 to 195 and 203 to 216; these read RKRRVRDNM and RTIG…NKKS. The segment at 249–256 is promoter-binding site; the sequence is RGFVYFVE. One can recognise a RdRp catalytic domain in the interval 286–483; the sequence is VRKMMTNSQD…GINMSKKKSY (198 aa).

This sequence belongs to the influenza viruses polymerase PB1 family. In terms of assembly, influenza RNA polymerase is composed of three subunits: PB1, PB2 and PA. Interacts (via N-terminus) with PA (via C-terminus). Interacts (via C-terminus) with PB2 (via N-terminus); this interaction is essential for transcription initiation. Post-translationally, phosphorylated by host PRKCA.

The protein resides in the host nucleus. It localises to the host cytoplasm. It catalyses the reaction RNA(n) + a ribonucleoside 5'-triphosphate = RNA(n+1) + diphosphate. RNA-dependent RNA polymerase which is responsible for replication and transcription of virus RNA segments. The transcription of viral mRNAs occurs by a unique mechanism called cap-snatching. 5' methylated caps of cellular mRNAs are cleaved after 10-13 nucleotides by PA. In turn, these short capped RNAs are used as primers by PB1 for transcription of viral mRNAs. During virus replication, PB1 initiates RNA synthesis and copy vRNA into complementary RNA (cRNA) which in turn serves as a template for the production of more vRNAs. This is RNA-directed RNA polymerase catalytic subunit from Influenza A virus (strain A/Grey teal/Australia/2/1979 H4N4).